Consider the following 134-residue polypeptide: Arsenate reductase (134 aa).

Catalysis depends on nucleophile residues C11, C83, and C90. 2 cysteine pairs are disulfide-bonded: C11–C83 and C83–C90.

This sequence belongs to the low molecular weight phosphotyrosine protein phosphatase family. Thioredoxin-coupled ArsC subfamily.

It is found in the cytoplasm. It carries out the reaction arsenate + [thioredoxin]-dithiol + H(+) = arsenite + [thioredoxin]-disulfide + H2O. Catalyzes the reduction of arsenate [As(V)] to arsenite [As(III)]. The chain is Arsenate reductase from Bacillus cereus (strain ATCC 14579 / DSM 31 / CCUG 7414 / JCM 2152 / NBRC 15305 / NCIMB 9373 / NCTC 2599 / NRRL B-3711).